A 252-amino-acid polypeptide reads, in one-letter code: Probable transcriptional regulatory protein RT0442 (252 aa).

The tract at residues 1–22 is disordered; that stretch reads MSGHSKFKNIQHRKGAQDKKKS.

Belongs to the TACO1 family.

The protein localises to the cytoplasm. The chain is Probable transcriptional regulatory protein RT0442 from Rickettsia typhi (strain ATCC VR-144 / Wilmington).